Consider the following 606-residue polypeptide: Leucine-rich repeat and immunoglobulin-like domain-containing nogo receptor-interacting protein 1 (606 aa).

The N-terminal stretch at 1 to 27 (MILQLPSCLCPILLIVVGSILSGSASG) is a signal peptide. 2 disulfides stabilise this stretch: Cys-28/Cys-34 and Cys-32/Cys-43. An LRRNT domain is found at 28–57 (CPQRCDCSPQDRSVLCHRKRYLDVPEGIPT). Residues 28-547 (CPQRCDCSPQ…FDIKTLIIAT (520 aa)) lie on the Extracellular side of the membrane. 11 LRR repeats span residues 58–79 (DTRL…EFSA), 82–103 (YLEE…AFNG), 106–127 (NLRS…VFTG), 130–151 (NLTQ…MFQD), 154–175 (NLKS…AFRG), 178–199 (SLEE…ALSH), 202–223 (GLIT…SFKR), 250–271 (NLTS…AIRH), 274–295 (YLRF…MLYE), 298–319 (RLQE…AFRG), and 322–343 (HLKV…SFHS). The N-linked (GlcNAc...) asparagine glycan is linked to Asn-130. A glycan (N-linked (GlcNAc...) asparagine) is linked at Asn-188. 3 N-linked (GlcNAc...) asparagine glycosylation sites follow: Asn-250, Asn-260, and Asn-279. N-linked (GlcNAc...) asparagine glycans are attached at residues Asn-327, Asn-374, Asn-478, Asn-491, Asn-512, Asn-523, and Asn-528. Residues 355-409 (NPLACDCRLLWIFRRRWRLNFSRQQPSCSSPEYVQGKEFKDFPDVLQPNYFTCRR) enclose the LRRCT domain. 3 disulfide bridges follow: Cys-359–Cys-382, Cys-361–Cys-407, and Cys-432–Cys-483. An Ig-like C2-type domain is found at 397–496 (PDVLQPNYFT…NAGGNDTSLA (100 aa)). Residues 548-568 (TMGFISFLGVVLFCLVLLFLW) traverse the membrane as a helical segment. Residues 569-606 (SRGKGNTKHNIEIEYVPRKSDAGLSSADAPRKFNMKMI) lie on the Cytoplasmic side of the membrane.

The protein localises to the cell membrane. May play a role in regulating axonal regeneration and plasticity in the adult central nervous system. This chain is Leucine-rich repeat and immunoglobulin-like domain-containing nogo receptor-interacting protein 1 (lingo1), found in Xenopus tropicalis (Western clawed frog).